The sequence spans 98 residues: Putative pterin-4-alpha-carbinolamine dehydratase (98 aa).

This sequence belongs to the pterin-4-alpha-carbinolamine dehydratase family.

It catalyses the reaction (4aS,6R)-4a-hydroxy-L-erythro-5,6,7,8-tetrahydrobiopterin = (6R)-L-erythro-6,7-dihydrobiopterin + H2O. This chain is Putative pterin-4-alpha-carbinolamine dehydratase, found in Mesorhizobium japonicum (strain LMG 29417 / CECT 9101 / MAFF 303099) (Mesorhizobium loti (strain MAFF 303099)).